Here is a 139-residue protein sequence, read N- to C-terminus: MMKILVCLPLLTLYAGCVYGIATGNPVSRLVTETLSLITAHRTLLIGNGTLRISIPDPQNHPLCIEEIFQGIETLKNQTAEENVVEKIFQNLSSLKGYITAKEKQCGGERRRVEQFLDYLEEFLRTINIEWNTEWTVES.

A signal peptide spans 1–19 (MMKILVCLPLLTLYAGCVY). Residues N48, N77, and N91 are each glycosylated (N-linked (GlcNAc...) asparagine).

It belongs to the IL-5 family. In terms of assembly, homodimer; disulfide-linked. Interacts with IL5RA. Interacts with CSF2RB.

The protein resides in the secreted. Functionally, homodimeric cytokine expressed predominantly by T-lymphocytes and NK cells that plays an important role in the survival, differentiation, and chemotaxis of eosinophils. Also acts on activated and resting B-cells to induce immunoglobulin production, growth, and differentiation. Mechanistically, exerts its biological effects through a receptor composed of IL5RA subunit and the cytokine receptor common subunit beta/CSF2RB. Binding to the receptor leads to activation of various kinases including LYN, SYK and JAK2 and thereby propagates signals through the RAS-MAPK and JAK-STAT5 pathways respectively. This chain is Interleukin-5 (IL5), found in Notamacropus eugenii (Tammar wallaby).